Consider the following 193-residue polypeptide: Large ribosomal subunit protein eL19A (193 aa).

Residues 156 to 179 are disordered; it reads QEQQDARRARAKAARQRRAKAVEE. The span at 164-174 shows a compositional bias: basic residues; sequence ARAKAARQRRA.

This sequence belongs to the eukaryotic ribosomal protein eL19 family. As to quaternary structure, component of the large ribosomal subunit (LSU). Mature yeast ribosomes consist of a small (40S) and a large (60S) subunit. The 40S small subunit contains 1 molecule of ribosomal RNA (18S rRNA) and at least 33 different proteins. The large 60S subunit contains 3 rRNA molecules (25S, 5.8S and 5S rRNA) and at least 46 different proteins. eL19 lies in close proximity to the binding site for eukaryotic initiation factor eIF4G.

The protein resides in the cytoplasm. Functionally, component of the ribosome, a large ribonucleoprotein complex responsible for the synthesis of proteins in the cell. The small ribosomal subunit (SSU) binds messenger RNAs (mRNAs) and translates the encoded message by selecting cognate aminoacyl-transfer RNA (tRNA) molecules. The large subunit (LSU) contains the ribosomal catalytic site termed the peptidyl transferase center (PTC), which catalyzes the formation of peptide bonds, thereby polymerizing the amino acids delivered by tRNAs into a polypeptide chain. The nascent polypeptides leave the ribosome through a tunnel in the LSU and interact with protein factors that function in enzymatic processing, targeting, and the membrane insertion of nascent chains at the exit of the ribosomal tunnel. eL19 may play a role in the last stages of translation initiation, in particular subunit joining and shedding/releasing factors. The protein is Large ribosomal subunit protein eL19A (rpl1901) of Schizosaccharomyces pombe (strain 972 / ATCC 24843) (Fission yeast).